Consider the following 295-residue polypeptide: uncharacterized protein (295 aa).

Basic residues predominate over residues 1–13 (MRHSVARPTRLPR). Disordered stretches follow at residues 1 to 111 (MRHS…AGLS) and 183 to 295 (TSAF…PRDS). Positions 57–67 (AGPSAGAAARP) are enriched in low complexity. Pro residues predominate over residues 68 to 77 (AAPPPQPREP). Composition is skewed to basic and acidic residues over residues 245–257 (LRPK…DRRP) and 280–295 (GEPH…PRDS).

This is an uncharacterized protein from Homo sapiens (Human).